The chain runs to 303 residues: NAD kinase (303 aa).

Asp85 serves as the catalytic Proton acceptor. NAD(+)-binding positions include 85-86, 159-160, Arg187, Asp189, 200-205, Ala224, and Gln258; these read DG, ND, and TAYALS.

The protein belongs to the NAD kinase family. Requires a divalent metal cation as cofactor.

Its subcellular location is the cytoplasm. The catalysed reaction is NAD(+) + ATP = ADP + NADP(+) + H(+). Involved in the regulation of the intracellular balance of NAD and NADP, and is a key enzyme in the biosynthesis of NADP. Catalyzes specifically the phosphorylation on 2'-hydroxyl of the adenosine moiety of NAD to yield NADP. This chain is NAD kinase, found in Variovorax paradoxus (strain S110).